The primary structure comprises 116 residues: UPF0342 protein BH1149 (116 aa).

Belongs to the UPF0342 family.

This chain is UPF0342 protein BH1149, found in Halalkalibacterium halodurans (strain ATCC BAA-125 / DSM 18197 / FERM 7344 / JCM 9153 / C-125) (Bacillus halodurans).